Consider the following 427-residue polypeptide: Glutamate-1-semialdehyde 2,1-aminomutase (427 aa).

Lys265 carries the post-translational modification N6-(pyridoxal phosphate)lysine.

The protein belongs to the class-III pyridoxal-phosphate-dependent aminotransferase family. HemL subfamily. Homodimer. It depends on pyridoxal 5'-phosphate as a cofactor.

It localises to the cytoplasm. The enzyme catalyses (S)-4-amino-5-oxopentanoate = 5-aminolevulinate. The protein operates within porphyrin-containing compound metabolism; protoporphyrin-IX biosynthesis; 5-aminolevulinate from L-glutamyl-tRNA(Glu): step 2/2. The polypeptide is Glutamate-1-semialdehyde 2,1-aminomutase (Pseudomonas fluorescens (strain SBW25)).